The chain runs to 461 residues: Argininosuccinate lyase (461 aa).

This sequence belongs to the lyase 1 family. Argininosuccinate lyase subfamily.

The protein localises to the cytoplasm. It carries out the reaction 2-(N(omega)-L-arginino)succinate = fumarate + L-arginine. Its pathway is amino-acid biosynthesis; L-arginine biosynthesis; L-arginine from L-ornithine and carbamoyl phosphate: step 3/3. This chain is Argininosuccinate lyase, found in Dehalococcoides mccartyi (strain ATCC BAA-2266 / KCTC 15142 / 195) (Dehalococcoides ethenogenes (strain 195)).